Here is a 487-residue protein sequence, read N- to C-terminus: Phosphatidylserine synthase 2 (487 aa).

Residues 1 to 10 (MRRGERRDAG) are compositionally biased toward basic and acidic residues. The disordered stretch occupies residues 1–50 (MRRGERRDAGGPRPESPVPAGRASLEEPPDGPSAGQATGPGEGRRSTESE). Residues 1–62 (MRRGERRDAG…DDGTNTFFWR (62 aa)) lie on the Cytoplasmic side of the membrane. Phosphoserine occurs at positions 16 and 24. Residues 63–83 (AHTLTVLFILTCTLGYVTLLE) traverse the membrane as a helical segment. Residues 84–96 (ETPQDTAYNTKRG) are Lumenal-facing. Residues 97 to 117 (IVASILVFLCFGVTQAKDGPF) form a helical membrane-spanning segment. Residues 118–126 (SRPHPAYWR) lie on the Cytoplasmic side of the membrane. A helical transmembrane segment spans residues 127–147 (FWLCVSVVYELFLIFILFQTV). The Lumenal portion of the chain corresponds to 148 to 313 (QDGRQFLKYV…EWKPASSLRR (166 aa)). Asn-181 carries N-linked (GlcNAc...) asparagine glycosylation. A helical transmembrane segment spans residues 314–334 (WLAVCGIILVFLLAELNTFYL). Lys-335 is a topological domain (cytoplasmic). The chain crosses the membrane as a helical span at residues 336–356 (FVLWMPPEHYLVLLRLVFFVN). Residues 357 to 376 (VGGVAMREIYDFMDDPKPHK) lie on the Lumenal side of the membrane. Residues 377–397 (KLGPQAWLVAAITATELLIVV) form a helical membrane-spanning segment. The Cytoplasmic segment spans residues 398-403 (KYDPHT). A helical transmembrane segment spans residues 404–424 (LTLSLPFYISQCWTLGSVLAL). Over 425–487 (TWTVWRFFLR…AEGEGAPTPN (63 aa)) the chain is Lumenal. Positions 451–487 (KDDQGSTVGNGDQHPLGLDEDLLGPGVAEGEGAPTPN) are disordered. At Thr-485 the chain carries Phosphothreonine.

The protein belongs to the phosphatidyl serine synthase family.

It localises to the endoplasmic reticulum membrane. It catalyses the reaction a 1,2-diacyl-sn-glycero-3-phosphoethanolamine + L-serine = a 1,2-diacyl-sn-glycero-3-phospho-L-serine + ethanolamine. The enzyme catalyses 1-hexadecanoyl-2-(9Z-octadecenoyl)-sn-glycero-3-phosphoethanolamine + L-serine = 1-hexadecanoyl-2-(9Z-octadecenoyl)-sn-glycero-3-phospho-L-serine + ethanolamine. The catalysed reaction is 1-hexadecanoyl-2-(4Z,7Z,10Z,13Z,16Z,19Z-docosahexaenoyl)-sn-glycero-3-phosphoethanolamine + L-serine = 1-hexadecanoyl-2-(4Z,7Z,10Z,13Z,16Z,19Z-docosahexaenoyl)-sn-glycero-3-phosphoserine + ethanolamine. It carries out the reaction 1-octadecanoyl-2-(5Z,8Z,11Z,14Z)-eicosatetraenoyl-sn-glycero-3-phosphoethanolamine + L-serine = 1-octadecanoyl-2-(5Z,8Z,11Z,14Z)-eicosatetraenoyl-sn-glycero-3-phosphoserine + ethanolamine. It catalyses the reaction 1-octadecanoyl-2-(4Z,7Z,10Z,13Z,16Z,19Z-docosahexaenoyl)-sn-glycero-3-phosphoethanolamine + L-serine = 1-octadecanoyl-2-(4Z,7Z,10Z,13Z,16Z,19Z-docosahexaenoyl)-sn-glycero-3-phosphoserine + ethanolamine. The enzyme catalyses 1-(1Z-octadecenyl)-2-(4Z,7Z,10Z,13Z,16Z,19Z-docosahexaenoyl)-sn-glycero-3-phosphoethanolamine + L-serine = 1-(1Z-octadecenyl)-2-(4Z,7Z,10Z,13Z,16Z,19Z-docosahexaenoyl)-sn-glycero-3-phospho-L-serine + ethanolamine. The catalysed reaction is 1-octadecanoyl-2-(9Z-octadecenoyl)-sn-glycero-3-phosphoethanolamine + L-serine = 1-octadecanoyl-2-(9Z-octadecenoyl)-sn-glycero-3-phospho-L-serine + ethanolamine. It carries out the reaction 1-(1Z-octadecenyl)-2-(9Z-octadecenoyl)-sn-glycero-3-phosphoethanolamine + L-serine = 1-(1Z-octadecenyl)-2-(9Z-octadecenoyl)-sn-glycero-3-phospho-L-serine + ethanolamine. It catalyses the reaction 1-(1Z-octadecenyl)-2-(5Z,8Z,11Z,14Z- eicosatetraenoyl)-sn-glycero-3-phosphoethanolamine + L-serine = 1-(1Z-octadecenyl)-2-(5Z,8Z,11Z,14Z-eicosatetraenoyl)-sn-glycero-3-phospho-L-serine + ethanolamine. It participates in phospholipid metabolism; phosphatidylserine biosynthesis. Requires calcium ions. Inhibited by exogenous phosphatidylserine. In terms of biological role, catalyzes a base-exchange reaction in which the polar head group of phosphatidylethanolamine (PE) or phosphatidylcholine (PC) is replaced by L-serine. Catalyzes the conversion of phosphatatidylethanolamine and does not act on phosphatidylcholine. Can utilize both phosphatidylethanolamine (PE) plasmalogen and diacyl PE as substrate and the latter is six times better utilized, indicating the importance of an ester linkage at the sn-1 position. Although it shows no sn-1 fatty acyl preference, exhibits significant preference towards docosahexaenoic acid (22:6n-3) compared with 18:1 or 20:4 at the sn-2 position. The protein is Phosphatidylserine synthase 2 (PTDSS2) of Homo sapiens (Human).